Here is a 151-residue protein sequence, read N- to C-terminus: Ribosomal RNA large subunit methyltransferase H (151 aa).

S-adenosyl-L-methionine contacts are provided by residues A101 and 119–124; that span reads LSEMTF.

The protein belongs to the RNA methyltransferase RlmH family. As to quaternary structure, homodimer.

It localises to the cytoplasm. It carries out the reaction pseudouridine(1915) in 23S rRNA + S-adenosyl-L-methionine = N(3)-methylpseudouridine(1915) in 23S rRNA + S-adenosyl-L-homocysteine + H(+). Functionally, specifically methylates the pseudouridine at position 1915 (m3Psi1915) in 23S rRNA. This is Ribosomal RNA large subunit methyltransferase H from Helicobacter pylori (strain G27).